We begin with the raw amino-acid sequence, 425 residues long: Beta-1,4-galactosyltransferase galt-1 (425 aa).

The Cytoplasmic portion of the chain corresponds to 1–8 (MPRITASK). A helical; Signal-anchor for type II membrane protein transmembrane segment spans residues 9 to 29 (IVLLIALSFCITVIYHFPIAT). Topologically, residues 30–425 (RSSKEYDEYG…FDSVVGLLDL (396 aa)) are lumenal. N-linked (GlcNAc...) asparagine glycans are attached at residues N109 and N152. Residues 189–394 (KMSICVPALF…LLRVYHYKDK (206 aa)) form the GT92 domain.

The protein belongs to the glycosyltransferase 92 family. It depends on Mn(2+) as a cofactor. Post-translationally, N-glycosylated. In terms of tissue distribution, expressed in intestine and coelomocytes.

It localises to the golgi apparatus. The protein resides in the golgi stack membrane. Its activity is regulated as follows. Inhibited by EDTA, Cu(2+) and Zn(2+). In terms of biological role, catalyzes the transfer of beta-galactose from UDP-galactose to position 4 of alpha-1,6-linked fucose at the reducing end GlcNAc in N-glycan cores. Involved in susceptibility to the nematotoxic C.cinerea galectin Cgl2, likely by contributing to the synthesis of core alpha-1,6-fucosylated N-glycans to which Cgl2 binds. This Caenorhabditis elegans protein is Beta-1,4-galactosyltransferase galt-1.